Reading from the N-terminus, the 197-residue chain is Small ribosomal subunit protein uS4 (197 aa).

The S4 RNA-binding domain maps to 88–150 (SRLDNLVYRM…AKSLEIILDN (63 aa)).

Belongs to the universal ribosomal protein uS4 family. In terms of assembly, part of the 30S ribosomal subunit. Contacts protein S5. The interaction surface between S4 and S5 is involved in control of translational fidelity.

Functionally, one of the primary rRNA binding proteins, it binds directly to 16S rRNA where it nucleates assembly of the body of the 30S subunit. Its function is as follows. With S5 and S12 plays an important role in translational accuracy. The protein is Small ribosomal subunit protein uS4 of Azobacteroides pseudotrichonymphae genomovar. CFP2.